Reading from the N-terminus, the 235-residue chain is Large ribosomal subunit protein uL1 (235 aa).

The protein belongs to the universal ribosomal protein uL1 family. As to quaternary structure, part of the 50S ribosomal subunit.

Functionally, binds directly to 23S rRNA. The L1 stalk is quite mobile in the ribosome, and is involved in E site tRNA release. Its function is as follows. Protein L1 is also a translational repressor protein, it controls the translation of the L11 operon by binding to its mRNA. The polypeptide is Large ribosomal subunit protein uL1 (Halothermothrix orenii (strain H 168 / OCM 544 / DSM 9562)).